A 137-amino-acid polypeptide reads, in one-letter code: Small ribosomal subunit protein bS6 (137 aa).

The interval Glu-113 to Lys-137 is disordered. Residues Ile-126–Lys-137 are compositionally biased toward basic and acidic residues.

The protein belongs to the bacterial ribosomal protein bS6 family.

Binds together with bS18 to 16S ribosomal RNA. The sequence is that of Small ribosomal subunit protein bS6 from Mycoplasma capricolum subsp. capricolum (strain California kid / ATCC 27343 / NCTC 10154).